The chain runs to 142 residues: MRHYEIIFLVHPDQSEQVGGMVERYTKLIEEDGGKIHRLEDWGRRQLAYAINNVHKAHYVMLNVECTGKALAELEDNFRYNDAVIRNLVIRRDEAVTGQSEMLKAEENRSERRERRERPEHDGSADGDDSDSDSDNSDNADE.

The disordered stretch occupies residues 96–142 (VTGQSEMLKAEENRSERRERRERPEHDGSADGDDSDSDSDNSDNADE). Positions 103-124 (LKAEENRSERRERRERPEHDGS) are enriched in basic and acidic residues. Positions 125–142 (ADGDDSDSDSDNSDNADE) are enriched in acidic residues.

Belongs to the bacterial ribosomal protein bS6 family.

In terms of biological role, binds together with bS18 to 16S ribosomal RNA. This chain is Small ribosomal subunit protein bS6, found in Pseudomonas fluorescens (strain Pf0-1).